The following is a 471-amino-acid chain: Glutamate--tRNA ligase 1 (471 aa).

The 'HIGH' region signature appears at 15-25; the sequence is PSPTGYLHIGG. The short motif at 243 to 247 is the 'KMSKS' region element; the sequence is KLSKR. Residue lysine 246 participates in ATP binding.

Belongs to the class-I aminoacyl-tRNA synthetase family. Glutamate--tRNA ligase type 1 subfamily. Monomer.

The protein localises to the cytoplasm. The enzyme catalyses tRNA(Glu) + L-glutamate + ATP = L-glutamyl-tRNA(Glu) + AMP + diphosphate. Functionally, catalyzes the attachment of glutamate to tRNA(Glu) in a two-step reaction: glutamate is first activated by ATP to form Glu-AMP and then transferred to the acceptor end of tRNA(Glu). This chain is Glutamate--tRNA ligase 1, found in Cereibacter sphaeroides (strain ATCC 17023 / DSM 158 / JCM 6121 / CCUG 31486 / LMG 2827 / NBRC 12203 / NCIMB 8253 / ATH 2.4.1.) (Rhodobacter sphaeroides).